A 371-amino-acid polypeptide reads, in one-letter code: Nuclear hormone receptor family member nhr-51 (371 aa).

The nuclear receptor DNA-binding region spans 2-77 (NKNCLICHRK…MGMQAFPRRV (76 aa)). 2 consecutive NR C4-type zinc fingers follow at residues 5-25 (CLICHRKAAGQHYGVLSCFAC) and 41-60 (CQKFNKCYEKFIILPKCKAC). The 240-residue stretch at 98–337 (MDEQRHWRML…KQLVTDTFVD (240 aa)) folds into the NR LBD domain.

This sequence belongs to the nuclear hormone receptor family.

Its subcellular location is the nucleus. Functionally, orphan nuclear receptor. The polypeptide is Nuclear hormone receptor family member nhr-51 (nhr-51) (Caenorhabditis elegans).